We begin with the raw amino-acid sequence, 437 residues long: Ribulose bisphosphate carboxylase/oxygenase activase, chloroplastic (437 aa).

Over residues 1 to 10 (MATAVSTIGS) the composition is skewed to polar residues. Residues 1–26 (MATAVSTIGSVNRAPPNLNGSSSSAS) are disordered. An ATP-binding site is contributed by 165 to 172 (GGKGQGKS).

The protein belongs to the RuBisCO activase family.

Its subcellular location is the plastid. The protein localises to the chloroplast stroma. Its function is as follows. Activation of RuBisCO (ribulose-1,5-bisphosphate carboxylase/oxygenase; EC 4.1.1.39) involves the ATP-dependent carboxylation of the epsilon-amino group of lysine leading to a carbamate structure. The protein is Ribulose bisphosphate carboxylase/oxygenase activase, chloroplastic (RCA) of Malus domestica (Apple).